Reading from the N-terminus, the 129-residue chain is MSSSTVRDLQRDLENKANDLGKIQKDIGKNHQLRKKYTIQLGENELVLKELDLLEEDANVYKLIGPVLVKQDLAEANANVRKRIEYISAELKRLDAILQDMEEKQNNKRETIMKLQQRLQTIQAGKAKA.

Coiled-coil stretches lie at residues 6 to 26 (VRDLQRDLENKANDLGKIQKD) and 84 to 118 (IEYISAELKRLDAILQDMEEKQNNKRETIMKLQQR).

It belongs to the prefoldin subunit beta family. Heterohexamer of two PFD-alpha type and four PFD-beta type subunits forming prefoldin co-chaperone complex. Interacts with PFD2, PFD3, PFD4 and PFD5. Interacts with LSM8, a specific subunit of the LSM2-8 complex, which is a core component of the spliceosome. Binds to HSP90 to facilitate the formation of a larger complex made at least of HSP90, PFD6 and LSM8.

Its subcellular location is the cytoplasm. The protein resides in the nucleus. Binds specifically to cytosolic chaperonin (c-CPN) and transfers target proteins to it. Binds to nascent polypeptide chain and promotes folding in an environment in which there are many competing pathways for nonnative proteins. Together with other chaperonins, contribute to the regulation of gene expression by modulating the spliceosome function on pre-mRNA splicing post-transcriptionally by acting as a co-chaperone of Hsp90 to control levels of LSM8. Required for the biogenesis of tubulins and for subsequent microtubules (MTs) organization and dynamicity, but unable to associate with microtubules. Involved in the process leading to microtubules dissociation in response to gibberellic acid (GA) probably due to the DELLA proteins-mediated translocation of the prefoldin co-chaperone complex from the cytoplasm to the nucleus. Contributes to the GA-dependent regulation of PIN2 trafficking at the plasma membrane, thus influencing auxin flux. The protein is Prefoldin subunit 6 of Arabidopsis thaliana (Mouse-ear cress).